We begin with the raw amino-acid sequence, 190 residues long: UPF0200 protein OE_4442F (190 aa).

Position 8-15 (8-15 (GMPGSGKS)) interacts with ATP. A disordered region spans residues 120-144 (ARIEDRDRPGDTDGEPLDAREDRER).

The protein belongs to the UPF0200 family.

This is UPF0200 protein OE_4442F from Halobacterium salinarum (strain ATCC 29341 / DSM 671 / R1).